Consider the following 357-residue polypeptide: DNA integrity scanning protein DisA (357 aa).

Residues 8 to 148 (PQELIEKIKL…NYKYVVNQVD (141 aa)) enclose the DAC domain. Residues Gly76, Leu94, Thr107, Thr111, and Arg128 each coordinate 3',3'-c-di-AMP.

This sequence belongs to the DisA family. In terms of assembly, homooctamer. Requires Mg(2+) as cofactor.

The catalysed reaction is 2 ATP = 3',3'-c-di-AMP + 2 diphosphate. Its activity is regulated as follows. Inhibited by 3'-dATP. Functionally, participates in a DNA-damage check-point. DisA forms globular foci that rapidly scan along the chromosomes searching for lesions. In terms of biological role, has diadenylate cyclase activity, catalyzing the condensation of 2 ATP molecules into cyclic di-AMP (c-di-AMP). c-di-AMP likely acts as a signaling molecule that may couple DNA integrity with a cellular process. This rate-limiting step is the accessibility of the active site; mutating the possible exit tunnel (residues 128-130) increases product 2-fold despite Arg-130 being important for ATP-binding. Does not convert GTP to c-di-GMP. The chain is DNA integrity scanning protein DisA from Thermotoga maritima (strain ATCC 43589 / DSM 3109 / JCM 10099 / NBRC 100826 / MSB8).